The following is a 332-amino-acid chain: Aspartate carbamoyltransferase catalytic subunit (332 aa).

Residues 1-20 are disordered; that stretch reads MPNTHDTKNNVSPSEYAKFD. Carbamoyl phosphate is bound by residues Arg-72 and Thr-73. Lys-100 is an L-aspartate binding site. 3 residues coordinate carbamoyl phosphate: Arg-122, His-152, and Gln-155. L-aspartate-binding residues include Arg-186 and Arg-241. Carbamoyl phosphate-binding residues include Gly-282 and Pro-283.

Belongs to the aspartate/ornithine carbamoyltransferase superfamily. ATCase family. As to quaternary structure, heterododecamer (2C3:3R2) of six catalytic PyrB chains organized as two trimers (C3), and six regulatory PyrI chains organized as three dimers (R2).

The enzyme catalyses carbamoyl phosphate + L-aspartate = N-carbamoyl-L-aspartate + phosphate + H(+). The protein operates within pyrimidine metabolism; UMP biosynthesis via de novo pathway; (S)-dihydroorotate from bicarbonate: step 2/3. In terms of biological role, catalyzes the condensation of carbamoyl phosphate and aspartate to form carbamoyl aspartate and inorganic phosphate, the committed step in the de novo pyrimidine nucleotide biosynthesis pathway. The sequence is that of Aspartate carbamoyltransferase catalytic subunit from Psychrobacter sp. (strain TAD1).